Reading from the N-terminus, the 375-residue chain is Growth/differentiation factor 8 (375 aa).

A signal peptide spans 1–18 (MQKLQISVYIYLFMLIVA). The propeptide occupies 19–266 (GPVDLNENSE…VTDTPKRSRR (248 aa)). 2 N-linked (GlcNAc...) asparagine glycosylation sites follow: asparagine 47 and asparagine 71. 4 disulfide bridges follow: cysteine 272–cysteine 282, cysteine 281–cysteine 340, cysteine 309–cysteine 372, and cysteine 313–cysteine 374.

The protein belongs to the TGF-beta family. Homodimer; disulfide-linked. Interacts with WFIKKN2, leading to inhibit its activity. Interacts with FSTL3. Post-translationally, synthesized as large precursor molecule that undergoes proteolytic cleavage to generate an N-terminal propeptide and a disulfide linked C-terminal dimer, which is the biologically active molecule. The circulating form consists of a latent complex of the C-terminal dimer and other proteins, including its propeptide, which maintain the C-terminal dimer in a latent, inactive state. Ligand activation requires additional cleavage of the prodomain by a tolloid-like metalloproteinase.

It is found in the secreted. Acts specifically as a negative regulator of skeletal muscle growth. The chain is Growth/differentiation factor 8 (MSTN) from Bubalus bubalis (Domestic water buffalo).